Consider the following 68-residue polypeptide: Protein ShdD (68 aa).

Its function is as follows. Involved in the non-oxidative decarboxylation and detoxification of phenolic derivatives under anaerobic conditions, however the precise biochemical function of ShdD in metabolism of phenolic acid is unknown. The polypeptide is Protein ShdD (Sedimentibacter hydroxybenzoicus (Clostridium hydroxybenzoicum)).